The following is a 308-amino-acid chain: tRNA pseudouridine synthase B (308 aa).

Residue aspartate 45 is the Nucleophile of the active site.

This sequence belongs to the pseudouridine synthase TruB family. Type 1 subfamily.

The enzyme catalyses uridine(55) in tRNA = pseudouridine(55) in tRNA. Responsible for synthesis of pseudouridine from uracil-55 in the psi GC loop of transfer RNAs. In Gloeothece citriformis (strain PCC 7424) (Cyanothece sp. (strain PCC 7424)), this protein is tRNA pseudouridine synthase B.